The following is a 188-amino-acid chain: Protein Cripto (188 aa).

The first 30 residues, 1–30 (MDCRKMARFSYSVIWIMAISKVFELGLVAG), serve as a signal peptide directing secretion. Residues 78–107 (LNRTCCLNGGTCMLGSFCACPPSFYGRNCE) enclose the EGF-like domain. N-linked (GlcNAc...) asparagine glycosylation occurs at Asn79. Disulfide bonds link Cys82–Cys89, Cys83–Cys95, Cys97–Cys106, Cys115–Cys133, Cys128–Cys149, and Cys131–Cys140. Asp150 carries GPI-anchor amidated aspartate lipidation. The propeptide at 151–188 (GLVMDEHLVASRTPELPPSARTTTFMLVGICLSIQSYY) is removed in mature form.

It belongs to the EGF-CFC (Cripto-1/FRL1/Cryptic) family. Interacts with the activin type-1 receptor ACVR1B. In terms of processing, the GPI-anchor is attached to the protein in the endoplasmic reticulum and serves to target the protein to the cell surface. There, it is processed by GPI processing phospholipase A2 (TMEM8A), removing an acyl-chain at the sn-2 position of GPI and releasing CRIPTO as a lysophosphatidylinositol-bearing form, which is further cleaved by phospholipase D (GPLD1) into a soluble form. Preferentially expressed in gastric and colorectal carcinomas than in their normal counterparts. Expressed in breast and lung.

It is found in the cell membrane. It localises to the secreted. GPI-anchored cell membrane protein involved in Nodal signaling. Cell-associated CRIPTO acts as a Nodal coreceptor in cis. Shedding of CRIPTO by TMEM8A modulates Nodal signaling by allowing soluble CRIPTO to act as a Nodal coreceptor on other cells. Could play a role in the determination of the epiblastic cells that subsequently give rise to the mesoderm. This chain is Protein Cripto, found in Homo sapiens (Human).